The sequence spans 348 residues: Glycerol-1-phosphate dehydrogenase [NAD(P)+] (348 aa).

Residues 94–98 and Thr-116 contribute to the NAD(+) site; that span reads GKVID. A substrate-binding site is contributed by Asp-121. Ser-125 lines the NAD(+) pocket. Asp-168 is a substrate binding site. Residues Asp-168 and His-248 each coordinate Zn(2+). His-252 lines the substrate pocket. His-264 provides a ligand contact to Zn(2+).

This sequence belongs to the glycerol-1-phosphate dehydrogenase family. Homooctamer. Zn(2+) is required as a cofactor.

It localises to the cytoplasm. The enzyme catalyses sn-glycerol 1-phosphate + NAD(+) = dihydroxyacetone phosphate + NADH + H(+). It catalyses the reaction sn-glycerol 1-phosphate + NADP(+) = dihydroxyacetone phosphate + NADPH + H(+). Its pathway is membrane lipid metabolism; glycerophospholipid metabolism. Catalyzes the NAD(P)H-dependent reduction of dihydroxyacetonephosphate (DHAP or glycerone phosphate) to glycerol 1-phosphate (G1P). The G1P thus generated is used as the glycerophosphate backbone of phospholipids in the cellular membranes of Archaea. This is Glycerol-1-phosphate dehydrogenase [NAD(P)+] from Methanosphaera stadtmanae (strain ATCC 43021 / DSM 3091 / JCM 11832 / MCB-3).